The sequence spans 275 residues: Tropinone reductase-like 2 (275 aa).

Position 17–41 (17–41 (IITGGASGIGACTAELFHENGAKVV)) interacts with NAD(+). Ser150 contributes to the substrate binding site. Tyr163 acts as the Proton acceptor in catalysis.

Belongs to the short-chain dehydrogenases/reductases (SDR) family.

Functionally, has no tropinone reductase activity. This chain is Tropinone reductase-like 2, found in Erythroxylum coca (Coca plant).